A 639-amino-acid chain; its full sequence is Threonine--tRNA ligase (639 aa).

Residues 1–61 (MIRITLPDNS…DHDARLQIIT (61 aa)) form the TGS domain. The catalytic stretch occupies residues 242 to 533 (DHRRLGRELD…LIEQHAGALP (292 aa)). Positions 333, 384, and 510 each coordinate Zn(2+).

This sequence belongs to the class-II aminoacyl-tRNA synthetase family. As to quaternary structure, homodimer. The cofactor is Zn(2+).

The protein localises to the cytoplasm. It catalyses the reaction tRNA(Thr) + L-threonine + ATP = L-threonyl-tRNA(Thr) + AMP + diphosphate + H(+). Catalyzes the attachment of threonine to tRNA(Thr) in a two-step reaction: L-threonine is first activated by ATP to form Thr-AMP and then transferred to the acceptor end of tRNA(Thr). Also edits incorrectly charged L-seryl-tRNA(Thr). The polypeptide is Threonine--tRNA ligase (Paracidovorax citrulli (strain AAC00-1) (Acidovorax citrulli)).